Consider the following 267-residue polypeptide: 3-oxoadipate enol-lactonase 2 (267 aa).

It carries out the reaction (4,5-dihydro-5-oxofuran-2-yl)-acetate + H2O = 3-oxoadipate + H(+). It functions in the pathway aromatic compound metabolism; beta-ketoadipate pathway; 3-oxoadipate from 5-oxo-4,5-dihydro-2-furylacetate: step 1/1. The chain is 3-oxoadipate enol-lactonase 2 (catD) from Acinetobacter baylyi (strain ATCC 33305 / BD413 / ADP1).